A 665-amino-acid polypeptide reads, in one-letter code: Cinnamate reductase (665 aa).

Q109 contributes to the FMN binding site. Y182 serves as the catalytic Proton donor. FMN is bound by residues R230, R319, and 341-342 (GR). Residues C365, C368, C372, and C384 each contribute to the [4Fe-4S] cluster site. Residues A415, E434, N442, K452, and A479 each contribute to the FAD site.

It in the N-terminal section; belongs to the NADH:flavin oxidoreductase/NADH oxidase family. The cofactor is FMN. FAD serves as cofactor. It depends on [4Fe-4S] cluster as a cofactor.

The enzyme catalyses 3-phenylpropanoate + NAD(+) = (E)-cinnamate + NADH + H(+). It functions in the pathway amino-acid degradation; L-phenylalanine degradation. Involved in the fermentation of L-phenylalanine via a Stickland reaction. Catalyzes the reduction of (E)-cinnamate to yield 3-phenylpropionate. The sequence is that of Cinnamate reductase from Clostridium sporogenes (strain ATCC 7955 / DSM 767 / NBRC 16411 / NCIMB 8053 / NCTC 8594 / PA 3679).